Here is an 81-residue protein sequence, read N- to C-terminus: Large ribosomal subunit protein bL31B (81 aa).

It belongs to the bacterial ribosomal protein bL31 family. Type B subfamily. In terms of assembly, part of the 50S ribosomal subunit.

This Lactobacillus helveticus (strain DPC 4571) protein is Large ribosomal subunit protein bL31B.